The sequence spans 339 residues: Lipoate-protein ligase A (339 aa).

Positions 29-217 (PKKQSILFLW…AFFQHYGMKV (189 aa)) constitute a BPL/LPL catalytic domain. Residues arginine 71, 76-79 (GAVF), and lysine 135 each bind ATP. Residue lysine 135 coordinates (R)-lipoate.

Belongs to the LplA family. Monomer.

It is found in the cytoplasm. The enzyme catalyses L-lysyl-[lipoyl-carrier protein] + (R)-lipoate + ATP = N(6)-[(R)-lipoyl]-L-lysyl-[lipoyl-carrier protein] + AMP + diphosphate + H(+). It participates in protein modification; protein lipoylation via exogenous pathway; protein N(6)-(lipoyl)lysine from lipoate: step 1/2. The protein operates within protein modification; protein lipoylation via exogenous pathway; protein N(6)-(lipoyl)lysine from lipoate: step 2/2. In terms of biological role, catalyzes both the ATP-dependent activation of exogenously supplied lipoate to lipoyl-AMP and the transfer of the activated lipoyl onto the lipoyl domains of lipoate-dependent enzymes. The chain is Lipoate-protein ligase A from Blochmanniella pennsylvanica (strain BPEN).